A 618-amino-acid chain; its full sequence is Vacuolar-sorting receptor 5 (618 aa).

The signal sequence occupies residues Met1 to Gly23. Residues Phe24–Arg563 lie on the Lumenal side of the membrane. Positions Lys58 to Leu164 constitute a PA domain. N-linked (GlcNAc...) asparagine glycosylation is found at Asn81, Asn293, and Asn430. EGF-like domains are found at residues Glu412–Lys462 and Gly465–Glu511. 7 disulfide bridges follow: Cys416/Cys434, Cys423/Cys443, Cys445/Cys461, Cys469/Cys489, Cys476/Cys497, Cys499/Cys510, and Cys540/Cys553. One can recognise an EGF-like 3; calcium-binding domain in the interval Asp512–Ile554. Asn542 is a glycosylation site (N-linked (GlcNAc...) asparagine). A helical transmembrane segment spans residues Gly564–Phe584. Over Tyr585 to Lys618 the chain is Cytoplasmic. The Tyrosine-based internalization motif motif lies at Tyr604–Leu607.

It belongs to the VSR (BP-80) family. As to expression, expressed in seedlings, roots, leaves, flowers and siliques.

It is found in the membrane. The protein localises to the golgi apparatus membrane. The protein resides in the cytoplasmic vesicle. Its subcellular location is the clathrin-coated vesicle membrane. It localises to the prevacuolar compartment membrane. Its function is as follows. Vacuolar-sorting receptor (VSR) involved in clathrin-coated vesicles sorting from Golgi apparatus to vacuoles. The sequence is that of Vacuolar-sorting receptor 5 (VSR5) from Arabidopsis thaliana (Mouse-ear cress).